Here is a 218-residue protein sequence, read N- to C-terminus: Small ribosomal subunit protein uS3 (218 aa).

The region spanning 38–106 (IREFISKRLS…RVHINILEIK (69 aa)) is the KH type-2 domain.

Belongs to the universal ribosomal protein uS3 family. In terms of assembly, part of the 30S ribosomal subunit. Forms a tight complex with proteins S10 and S14.

Binds the lower part of the 30S subunit head. Binds mRNA in the 70S ribosome, positioning it for translation. The polypeptide is Small ribosomal subunit protein uS3 (Bacillus velezensis (strain DSM 23117 / BGSC 10A6 / LMG 26770 / FZB42) (Bacillus amyloliquefaciens subsp. plantarum)).